Consider the following 93-residue polypeptide: Protein E7 (93 aa).

Residues M1–T43 form an E7 terminal domain region. The LXCXE motif; interaction with host RB1 and TMEM173/STING signature appears at L25–E29. A zinc finger lies at C51–C86. A Nuclear export signal motif is present at residues I68–L76.

This sequence belongs to the papillomaviridae E7 protein family. As to quaternary structure, homodimer. Homooligomer. Interacts with host RB1; this interaction induces dissociation of RB1-E2F1 complex thereby disrupting RB1 activity. Interacts with host EP300; this interaction represses EP300 transcriptional activity. Interacts with protein E2; this interaction inhibits E7 oncogenic activity. Interacts with host TMEM173/STING; this interaction impairs the ability of TMEM173/STING to sense cytosolic DNA and promote the production of type I interferon (IFN-alpha and IFN-beta). Post-translationally, highly phosphorylated.

Its subcellular location is the host cytoplasm. The protein localises to the host nucleus. In terms of biological role, plays a role in viral genome replication by driving entry of quiescent cells into the cell cycle. Stimulation of progression from G1 to S phase allows the virus to efficiently use the cellular DNA replicating machinery to achieve viral genome replication. E7 protein has both transforming and trans-activating activities. Induces the disassembly of the E2F1 transcription factor from RB1, with subsequent transcriptional activation of E2F1-regulated S-phase genes. Interferes with host histone deacetylation mediated by HDAC1 and HDAC2, leading to transcription activation. Also plays a role in the inhibition of both antiviral and antiproliferative functions of host interferon alpha. Interaction with host TMEM173/STING impairs the ability of TMEM173/STING to sense cytosolic DNA and promote the production of type I interferon (IFN-alpha and IFN-beta). The sequence is that of Protein E7 from Human papillomavirus 9.